We begin with the raw amino-acid sequence, 155 residues long: MSKITEQVETIIQPVLNDLNFELVEVEFTKEGKDHFLRVSIDKEGGVDLNDCALASEKISEVMDAEDPIQEMYYLDVASPGAERPIKKEKDFQNAITKPVFVSLYAPIEGSKEWLGILQSVDETNIVMEVKEKAKTKQIEIPRNKIAKARHAVMI.

The protein belongs to the RimP family.

Its subcellular location is the cytoplasm. Required for maturation of 30S ribosomal subunits. The polypeptide is Ribosome maturation factor RimP (Staphylococcus saprophyticus subsp. saprophyticus (strain ATCC 15305 / DSM 20229 / NCIMB 8711 / NCTC 7292 / S-41)).